Reading from the N-terminus, the 810-residue chain is Venom phosphodiesterase 2 (810 aa).

A signal peptide spans 1–23 (MIQQKVLFISLVAVTLGLGLGLG). An SMB domain is found at 33 to 77 (QSWSCSKLRCGEKRIANVLCSCSDDCLEKKDCCTDYKSICKGETS). 9 disulfide bridges follow: C37-C42, C37-C54, C42-C72, C52-C54, C52-C65, C58-C64, C65-C72, C83-C129, and C91-C303. Residues D106 and T144 each contribute to the a divalent metal cation site. T144 functions as the AMP-threonine intermediate in the catalytic mechanism. 3 N-linked (GlcNAc...) asparagine glycosylation sites follow: N175, N218, and N229. K230 contacts AMP. D264, H268, D311, and H312 together coordinate a divalent metal cation. H268 serves as a coordination point for AMP. 6 disulfides stabilise this stretch: C319-C416, C367-C752, C500-C558, C513-C613, C515-C598, and C721-C731. Residue N364 is glycosylated (N-linked (GlcNAc...) asparagine). Residue H421 coordinates a divalent metal cation. N-linked (GlcNAc...) asparagine glycans are attached at residues N471, N553, N633, and N704.

Belongs to the nucleotide pyrophosphatase/phosphodiesterase family. Monomer cleaved in two subunits; disulfide-linked. Is synthesized as a single-chain protein and is subsequently cleaved to form a two-subunit protein held together with disulfide bonds. It depends on a divalent metal cation as a cofactor. As to expression, expressed by venom gland.

The protein localises to the secreted. It catalyses the reaction ADP + H2O = AMP + phosphate + H(+). Its function is as follows. Hydrolyzes ADP with high activity. Shows weak or no activity on 5'-AMP, 5'-GMP, 3'-AMP, ATP, cAMP, and cGMP. Is devoid of monophosphatase and proteinase activities. Dose-dependently inhibits platelet aggregation induced by ADP (IC(50)=0.99 uM) and collagen (IC(50)=1.4 uM). In Crotalus adamanteus (Eastern diamondback rattlesnake), this protein is Venom phosphodiesterase 2.